Consider the following 429-residue polypeptide: Methylenetetrahydrofolate--tRNA-(uracil-5-)-methyltransferase TrmFO (429 aa).

Position 7–12 (Gly-7–Gly-12) interacts with FAD.

It belongs to the MnmG family. TrmFO subfamily. FAD serves as cofactor.

It is found in the cytoplasm. It catalyses the reaction uridine(54) in tRNA + (6R)-5,10-methylene-5,6,7,8-tetrahydrofolate + NADH + H(+) = 5-methyluridine(54) in tRNA + (6S)-5,6,7,8-tetrahydrofolate + NAD(+). The enzyme catalyses uridine(54) in tRNA + (6R)-5,10-methylene-5,6,7,8-tetrahydrofolate + NADPH + H(+) = 5-methyluridine(54) in tRNA + (6S)-5,6,7,8-tetrahydrofolate + NADP(+). In terms of biological role, catalyzes the folate-dependent formation of 5-methyl-uridine at position 54 (M-5-U54) in all tRNAs. The sequence is that of Methylenetetrahydrofolate--tRNA-(uracil-5-)-methyltransferase TrmFO from Thermosipho melanesiensis (strain DSM 12029 / CIP 104789 / BI429).